Here is a 506-residue protein sequence, read N- to C-terminus: UDP-glycosyltransferase eriJ (506 aa).

It belongs to the UDP-glycosyltransferase family.

The enzyme catalyses 11-O-acetylcyathatriol + UDP-alpha-D-xylose = erinacine Q + UDP + H(+). It catalyses the reaction 11-O-acetylcyathatriol + UDP-alpha-D-glucose = erinacine Q2 + UDP + H(+). It functions in the pathway secondary metabolite biosynthesis. Functionally, UDP-glycosyltransferase; part of the gene cluster that mediates the biosynthesis of erinacines, cyathane-xylosides that show unique biological activities, including leishmanicidal activity, stimulating activity for nerve growth-factor synthesis, and agonistic activity toward the kappa opioid receptor. Within the pathway, eriJ tranfers xylose from UDP-xylose onto C-14 of 11-O-acetyl-cyathatriol to form eracine Q, and, at a lower rate, glucose from UDP-D-glucose to produce eracine Q2. The first step of the erinacines biosynthesis pathway is catalyzed by the geranylgeranyl diphosphate (GGPP) synthase eriE via conversion of farnesyl pyrophosphate and isopentyl pyrophosphate into geranylgeranyl pyrophosphate (GGPP). GGPP is then substrate of the diterpene cyclase eriG for the production of cyatha-3,12-diene. The cytochrome P450 monooxygenase eriI then hydroxylates cyatha-3,12-diene at C-14 of the seven-membered ring to produce erinacol, which is further hydroxylated at C-15 by the cytochrome P450 monooxygenase eriC to yield cyathadiol. The cytochrome P450 monooxygenase eriA then catalyzes C-11 hydroxylation in the presence of the short chain dehydrogenase/reductase (SDR) eriH, which leads to the production of cyathatriol. The acetyltransferase eriL converts cyathatriol into 11-O-acetyl-cyathatriol. The SDR eriH catalyzes further oxidation of 11-O-acetyl-cyathatriol into 1-O-acetylcyathin A3. Finally, the glycosyl transferase eriJ tranfers xylose from UDP-xylose onto C-14 of 11-O-acetyl-cyathatriol to form eracine Q. EriJ is also able to convert 11-O-acetyl-cyathatriol to eracine Q2 by using UDP-D-glucose as cosubstrate, but at a lower rate. This is UDP-glycosyltransferase eriJ from Hericium erinaceus (Lion's mane mushroom).